The chain runs to 341 residues: Glycerol-3-phosphate dehydrogenase [NAD(P)+] (341 aa).

NADPH-binding residues include Ser14, Phe15, Arg35, and Lys108. Sn-glycerol 3-phosphate is bound by residues Lys108 and Gly136. Ala140 is a binding site for NADPH. 5 residues coordinate sn-glycerol 3-phosphate: Lys191, Asp244, Ser254, Arg255, and Asn256. The Proton acceptor role is filled by Lys191. Arg255 contacts NADPH. The NADPH site is built by Val279 and Glu281.

It belongs to the NAD-dependent glycerol-3-phosphate dehydrogenase family.

Its subcellular location is the cytoplasm. It catalyses the reaction sn-glycerol 3-phosphate + NAD(+) = dihydroxyacetone phosphate + NADH + H(+). The enzyme catalyses sn-glycerol 3-phosphate + NADP(+) = dihydroxyacetone phosphate + NADPH + H(+). It functions in the pathway membrane lipid metabolism; glycerophospholipid metabolism. Catalyzes the reduction of the glycolytic intermediate dihydroxyacetone phosphate (DHAP) to sn-glycerol 3-phosphate (G3P), the key precursor for phospholipid synthesis. The sequence is that of Glycerol-3-phosphate dehydrogenase [NAD(P)+] from Pseudomonas fluorescens (strain ATCC BAA-477 / NRRL B-23932 / Pf-5).